Here is a 562-residue protein sequence, read N- to C-terminus: UPF0649 protein C1442.02 (562 aa).

2 positions are modified to phosphoserine: serine 285 and serine 286. The disordered stretch occupies residues 288–308 (DEEIAKNADVPAEVDNNSTKA).

This sequence belongs to the UPF0649 family.

It is found in the cytoplasm. The protein resides in the nucleus. In Schizosaccharomyces pombe (strain 972 / ATCC 24843) (Fission yeast), this protein is UPF0649 protein C1442.02.